Reading from the N-terminus, the 586-residue chain is Protein HOL1 (586 aa).

The Extracellular portion of the chain corresponds to 1–66 (MDKYTNRDHP…NWSSWRKLAH (66 aa)). Residues 67–87 (FGLMAFITAFTAATSNDAGAA) form a helical membrane-spanning segment. Residues 88-103 (QDSLNEIYGISYDSMN) lie on the Cytoplasmic side of the membrane. Residues 104–124 (TGAGVLFLGIGWSTLFLAPFA) form a helical membrane-spanning segment. Residues 125–130 (NLYGRK) lie on the Extracellular side of the membrane. Residues 131 to 151 (ITYIVCTTLGLFGALWFALAK) form a helical membrane-spanning segment. Over 152-189 (RTSDTIWSQLFVGISESCAEAQVQLSLSDIFFQHQLGS) the chain is Cytoplasmic. The helical transmembrane segment at 190-210 (VLTVYIMCTSIGTFLGPLIAG) threads the bilayer. Residues 211-219 (YISAFTNFR) lie on the Extracellular side of the membrane. The chain crosses the membrane as a helical span at residues 220–240 (WVGWVAVIISGGLLITIIFGC). Residues 241 to 362 (EETYFDRGQY…YFKYLKINLR (122 aa)) lie on the Cytoplasmic side of the membrane. Residues 363–383 (MFLFPPVWLSGMFWGIQDVFL) traverse the membrane as a helical segment. The Extracellular segment spans residues 384-413 (TFYLTTQESAYYEPPWNYSDFGVAIMNVPT). Residues 414–434 (LIGAVIGCICAGIVSDYFVLW) traverse the membrane as a helical segment. Topologically, residues 435–448 (MARHNRGILEAEFR) are cytoplasmic. The helical transmembrane segment at 449–469 (LYFSIATAIIGPAGLLMFGIG) threads the bilayer. Over 470-477 (TARQWPWQ) the chain is Extracellular. A helical transmembrane segment spans residues 478–498 (AIYVGLGFVGFAWGCSGDIAM). At 499 to 508 (AYLMDCYPDM) the chain is on the cytoplasmic side. The chain crosses the membrane as a helical span at residues 509–529 (VLEGMVCTAIINNTISCIFTF). The Extracellular portion of the chain corresponds to 530 to 544 (TCSDWLAASGTENTY). A helical transmembrane segment spans residues 545–565 (IALAVINFGITAFALPMYYYG). Over 566 to 586 (KRIRLWTKRWYLQSVNLRDGV) the chain is Cytoplasmic.

The protein resides in the membrane. Seems to be involved in the uptake of several cations and of histidinol. The sequence is that of Protein HOL1 (HOL1) from Saccharomyces cerevisiae (strain ATCC 204508 / S288c) (Baker's yeast).